Here is a 229-residue protein sequence, read N- to C-terminus: Apoptosis regulator Bcl-2 (229 aa).

Positions 10 to 30 match the BH4 motif; the sequence is DNREIVMKYIHYKLSQRGYEW. Positions 30 to 82 are disordered; it reads WDAGDAGAAPPGAAPAPGILSSQPGRTPAPSRTSPPPPPAAAAGPAPSPVPPV. The segment covering 33-61 has biased composition (low complexity); that stretch reads GDAGAAPPGAAPAPGILSSQPGRTPAPSR. The residue at position 62 (Thr-62) is a Phosphothreonine; by MAPK8. Pro residues predominate over residues 62–81; the sequence is TSPPPPPAAAAGPAPSPVPP. Ser-63 carries the phosphoserine; by MAPK8 and PKC modification. Ser-77 carries the phosphoserine; by MAPK8 modification. The BH3 signature appears at 83–97; the sequence is VHLTLRQAGDDFSRR. The BH1 motif lies at 126-145; it reads ELFRDGVNWGRIVAFFEFGG. Residues 177-192 carry the BH2 motif; sequence TWIQDNGGWDAFVELY. The chain crosses the membrane as a helical span at residues 202-223; that stretch reads FSWLSLKALLSLALVGACITLG.

Belongs to the Bcl-2 family. In terms of assembly, forms homodimers, and heterodimers with BAX, BAD, BAK and Bcl-X(L). Heterodimerization with BAX requires intact BH1 and BH2 motifs, and is necessary for anti-apoptotic activity. Component of the complex, at least composed of LRPPRC, BECN1 and BCL2; the interactions prevent BECN1 from forming an autophagy-inducing complex with PIK3C3. Interacts with EI24. Also interacts with APAF1, BBC3, BCL2L1, BNIPL, MRPL41 and TP53BP2. Binding to FKBP8 seems to target BCL2 to the mitochondria and probably interferes with the binding of BCL2 to its targets. Interacts with BAG1 in an ATP-dependent manner. Interacts with RAF1 (the 'Ser-338' and 'Ser-339' phosphorylated form). Interacts (via the BH4 domain) with EGLN3; the interaction prevents the formation of the BAX-BCL2 complex and inhibits the anti-apoptotic activity of BCL2. Interacts with G0S2; this interaction also prevents the formation of the anti-apoptotic BAX-BCL2 complex. Interacts with RTL10/BOP. Interacts with the SCF(FBXO10) complex. Interacts (via the loop between motifs BH4 and BH3) with NLRP1 (via LRR repeats), but not with NLRP2, NLRP3, NLRP4, PYCARD, nor MEFV. Interacts with GIMAP3/IAN4, GIMAP4/IAN1 and GIMAP5/IAN5. Interacts with BCAP31. Interacts with IRF3; the interaction is inhibited by Sendai virus infection. Interacts with BECN1; thereby inhibiting autophagy in non-starvation conditions. Interacts with AMBRA1; thereby inhibiting autophagy. In terms of processing, phosphorylation/dephosphorylation on Ser-63 regulates anti-apoptotic activity. Growth factor-stimulated phosphorylation on Ser-63 by PKC is required for the anti-apoptosis activity and occurs during the G2/M phase of the cell cycle. In the absence of growth factors, BCL2 appears to be phosphorylated by other protein kinases such as ERKs and stress-activated kinases. Phosphorylated by MAPK8/JNK1 at Thr-62, Ser-63 and Ser-77, which stimulates starvation-induced autophagy. Dephosphorylated by protein phosphatase 2A (PP2A). Proteolytically cleaved by caspases during apoptosis. The cleaved protein, lacking the BH4 motif, has pro-apoptotic activity, causes the release of cytochrome c into the cytosol promoting further caspase activity. Post-translationally, monoubiquitinated by PRKN, leading to an increase in its stability. Ubiquitinated by SCF(FBXO10), leading to its degradation by the proteasome.

The protein localises to the mitochondrion outer membrane. The protein resides in the nucleus membrane. It localises to the endoplasmic reticulum membrane. It is found in the cytoplasm. Suppresses apoptosis in a variety of cell systems including factor-dependent lymphohematopoietic and neural cells. Regulates cell death by controlling the mitochondrial membrane permeability. Appears to function in a feedback loop system with caspases. Inhibits caspase activity either by preventing the release of cytochrome c from the mitochondria and/or by binding to the apoptosis-activating factor (APAF-1). Also acts as an inhibitor of autophagy: interacts with BECN1 and AMBRA1 during non-starvation conditions and inhibits their autophagy function. May attenuate inflammation by impairing NLRP1-inflammasome activation, hence CASP1 activation and IL1B release. The sequence is that of Apoptosis regulator Bcl-2 (BCL2) from Bos taurus (Bovine).